The primary structure comprises 171 residues: MDYFTLFGLPARYQIDTQALSLRFQDLQRQYHPDKFANGTQAQQLAAVQQSATINQAWQTLRHPLTRAEYLLSLHGFDLASEQHTVRDTAFLMEQLTLREELDDIDQSKDDVRLESFIKRVQKMFDARLQQMVEQLDNAAWDAAADTVRKLRFLDKLRSSAEQLEEKLLDF.

Residues Asp2–Leu74 enclose the J domain.

The protein belongs to the HscB family. Interacts with HscA and stimulates its ATPase activity. Interacts with IscU.

Co-chaperone involved in the maturation of iron-sulfur cluster-containing proteins. Seems to help targeting proteins to be folded toward HscA. The chain is Co-chaperone protein HscB from Salmonella agona (strain SL483).